The primary structure comprises 2083 residues: Non-reducing polyketide synthase curS2 (2083 aa).

Residues 9 to 246 are N-terminal acylcarrier protein transacylase domain (SAT); sequence LLFGDVTDPW…NELDIHALQH (238 aa). Residues 366–798 form the Ketosynthase family 3 (KS3) domain; that stretch reads RDGIAIVGMA…GGNACLLLED (433 aa). Active-site for beta-ketoacyl synthase activity residues include Cys-543, His-678, and His-717. A malonyl-CoA:ACP transacylase (MAT) domain region spans residues 895-1201; sequence VFVFTGQGSH…THTLQPNTHN (307 aa). Ser-986 functions as the For acyl/malonyl transferase activity in the catalytic mechanism. Residues 1276–1415 are N-terminal hotdog fold; it reads AQYLVSKSSS…DPAKTQADWD (140 aa). Positions 1276–1585 constitute a PKS/mFAS DH domain; sequence AQYLVSKSSS…YQELPRVTWK (310 aa). The segment at 1285–1581 is product template (PT) domain; it reads SPKVQVVFRA…IDLRYQELPR (297 aa). Residues 1437 to 1585 form a C-terminal hotdog fold region; that stretch reads GHRMQPEVFY…YQELPRVTWK (149 aa). The Carrier domain occupies 1637–1714; that stretch reads DFDEGLVDAI…DLRRAFGANK (78 aa). Position 1674 is an O-(pantetheine 4'-phosphoryl)serine (Ser-1674). The segment at 1710-1790 is disordered; the sequence is FGANKPKTSK…KMDETDTSPA (81 aa). Positions 1718 to 1736 are enriched in low complexity; that stretch reads SKPQPGSTTPSSSQSSIPS. Over residues 1745-1754 the composition is skewed to polar residues; that stretch reads MSDTASSLGS. Over residues 1771–1784 the composition is skewed to basic and acidic residues; sequence LEPKPNHHLGKMDE. A thioesterase (TE) domain region spans residues 1811–2058; that stretch reads MMADGTGTIA…LSVAGDHLDL (248 aa). The For thioesterase activity role is filled by His-2065.

The protein operates within mycotoxin biosynthesis. In terms of biological role, non-reducing polyketide synthase; part of the gene cluster that mediates the biosynthesis of 10,11-dehydrocurvularin, a prevalent fungal phytotoxin with heat shock response and immune-modulatory activities. The highly reducing polyketide synthase curS1 is responsible for biosynthesis up to the tetraketide stage. The non-reducing polyketide synthase curS2 then conducts four additional chain extension cycles, producing the unreduced part of the nascent octaketide from C-1 to C-8 in 10,11-dehydrocurvularin. The polypeptide is Non-reducing polyketide synthase curS2 (Aspergillus terreus).